Consider the following 423-residue polypeptide: GPI mannosyltransferase 2 (423 aa).

The next 9 membrane-spanning stretches (helical) occupy residues 11–31 (ILSL…IALG), 106–126 (WEAL…VLAL), 139–159 (LAYL…ISAP), 160–180 (YAES…AISL), 197–219 (GLSY…LFAV), 240–260 (LVAP…PQVL), 299–319 (YWTP…TILL), 351–371 (LAAI…VQII), and 400–420 (GVIV…ASFL).

Belongs to the PIGV family.

Its subcellular location is the endoplasmic reticulum membrane. It functions in the pathway glycolipid biosynthesis; glycosylphosphatidylinositol-anchor biosynthesis. Mannosyltransferase involved in glycosylphosphatidylinositol-anchor biosynthesis. Transfers the second mannose to the glycosylphosphatidylinositol during GPI precursor assembly. In Gibberella zeae (strain ATCC MYA-4620 / CBS 123657 / FGSC 9075 / NRRL 31084 / PH-1) (Wheat head blight fungus), this protein is GPI mannosyltransferase 2 (GPI18).